A 565-amino-acid polypeptide reads, in one-letter code: Oxygen-dependent choline dehydrogenase (565 aa).

An FAD-binding site is contributed by 6–35 (DYIIVGAGSAGNTLATRLTEDAGVTVLLLE). The active-site Proton acceptor is the His-475.

Belongs to the GMC oxidoreductase family. The cofactor is FAD.

The enzyme catalyses choline + A = betaine aldehyde + AH2. It catalyses the reaction betaine aldehyde + NAD(+) + H2O = glycine betaine + NADH + 2 H(+). It participates in amine and polyamine biosynthesis; betaine biosynthesis via choline pathway; betaine aldehyde from choline (cytochrome c reductase route): step 1/1. Its function is as follows. Involved in the biosynthesis of the osmoprotectant glycine betaine. Catalyzes the oxidation of choline to betaine aldehyde and betaine aldehyde to glycine betaine at the same rate. The protein is Oxygen-dependent choline dehydrogenase of Pseudomonas putida (strain GB-1).